Here is a 305-residue protein sequence, read N- to C-terminus: Acetyl-coenzyme A carboxylase carboxyl transferase subunit beta (305 aa).

The region spanning 23-292 (GWLKCTHCNE…EENEPSPPPK (270 aa)) is the CoA carboxyltransferase N-terminal domain. Zn(2+)-binding residues include Cys-27, Cys-30, Cys-46, and Cys-49. Residues 27-49 (CTHCNELIHANELEQNSNCCPKC) form a C4-type zinc finger. The segment at 281–305 (FSEENEPSPPPKNLIKKTSPLKDKN) is disordered.

The protein belongs to the AccD/PCCB family. Acetyl-CoA carboxylase is a heterohexamer composed of biotin carboxyl carrier protein (AccB), biotin carboxylase (AccC) and two subunits each of ACCase subunit alpha (AccA) and ACCase subunit beta (AccD). Requires Zn(2+) as cofactor.

It localises to the cytoplasm. The catalysed reaction is N(6)-carboxybiotinyl-L-lysyl-[protein] + acetyl-CoA = N(6)-biotinyl-L-lysyl-[protein] + malonyl-CoA. It participates in lipid metabolism; malonyl-CoA biosynthesis; malonyl-CoA from acetyl-CoA: step 1/1. Functionally, component of the acetyl coenzyme A carboxylase (ACC) complex. Biotin carboxylase (BC) catalyzes the carboxylation of biotin on its carrier protein (BCCP) and then the CO(2) group is transferred by the transcarboxylase to acetyl-CoA to form malonyl-CoA. The chain is Acetyl-coenzyme A carboxylase carboxyl transferase subunit beta from Protochlamydia amoebophila (strain UWE25).